Here is a 250-residue protein sequence, read N- to C-terminus: 2,3-bisphosphoglycerate-dependent phosphoglycerate mutase (250 aa).

Substrate contacts are provided by residues 8–15 (RHGESQWN), 21–22 (TG), Arg-60, 87–90 (ERHY), Lys-98, 114–115 (RR), and 183–184 (GN). His-9 serves as the catalytic Tele-phosphohistidine intermediate. The active-site Proton donor/acceptor is Glu-87.

The protein belongs to the phosphoglycerate mutase family. BPG-dependent PGAM subfamily. Homodimer.

It catalyses the reaction (2R)-2-phosphoglycerate = (2R)-3-phosphoglycerate. It participates in carbohydrate degradation; glycolysis; pyruvate from D-glyceraldehyde 3-phosphate: step 3/5. Its function is as follows. Catalyzes the interconversion of 2-phosphoglycerate and 3-phosphoglycerate. This is 2,3-bisphosphoglycerate-dependent phosphoglycerate mutase from Bordetella parapertussis (strain 12822 / ATCC BAA-587 / NCTC 13253).